Consider the following 159-residue polypeptide: Transcription elongation factor GreA (159 aa).

A coiled-coil region spans residues 46 to 73 (AEYHAAKEEQSFVEGRIKEIELKLSRMQ).

The protein belongs to the GreA/GreB family.

Necessary for efficient RNA polymerase transcription elongation past template-encoded arresting sites. The arresting sites in DNA have the property of trapping a certain fraction of elongating RNA polymerases that pass through, resulting in locked ternary complexes. Cleavage of the nascent transcript by cleavage factors such as GreA or GreB allows the resumption of elongation from the new 3'terminus. GreA releases sequences of 2 to 3 nucleotides. This is Transcription elongation factor GreA from Vesicomyosocius okutanii subsp. Calyptogena okutanii (strain HA).